The chain runs to 488 residues: GTPase Der (488 aa).

One can recognise an EngA-type G 1 domain in the interval 3 to 166; the sequence is PVVALVGRPN…YALAPYAEAL (164 aa). Residues 9–16, 56–60, and 118–121 contribute to the GTP site; these read GRPNVGKS, DTGGI, and NKVD. A disordered region spans residues 168–191; sequence LNRDGDEDEDEEEREYSEEEAEAE. Acidic residues predominate over residues 172–189; the sequence is GDEDEDEEEREYSEEEAE. The EngA-type G 2 domain maps to 200-373; it reads IKMAIIGKPN…SVQEAYDSAT (174 aa). Residues 206 to 213, 253 to 257, and 318 to 321 contribute to the GTP site; these read GKPNVGKS, DTAGV, and NKWD. Residues 374–458 enclose the KH-like domain; sequence RRVSTSMLTR…PIQIRFQDSA (85 aa).

This sequence belongs to the TRAFAC class TrmE-Era-EngA-EngB-Septin-like GTPase superfamily. EngA (Der) GTPase family. In terms of assembly, associates with the 50S ribosomal subunit.

Functionally, GTPase that plays an essential role in the late steps of ribosome biogenesis. In Shewanella sediminis (strain HAW-EB3), this protein is GTPase Der.